The sequence spans 281 residues: Rhomboid protease AarA (281 aa).

7 helical membrane-spanning segments follow: residues 16–36 (FSLGAIALTLTLVLLNIAVYF), 76–96 (MLHSNGTHLAFNCLALFVIGI), 105–125 (FKLLAIYIISGIGAALFSAYW), 145–165 (IGVGASGAIMGIAAASVIYLI), 185–205 (QLYNLIAMIALTLINGLQSGV), 208–228 (AAHIGGAIIGALISIAYILVP), and 233–253 (VANLCITVIAASLLTMMIYLY). The active-site Nucleophile is the Ser-150. The active-site Charge relay system is the His-210.

The protein belongs to the peptidase S54 family.

The protein resides in the cell membrane. The catalysed reaction is Cleaves type-1 transmembrane domains using a catalytic dyad composed of serine and histidine that are contributed by different transmembrane domains.. Functionally, rhomboid serine protease that catalyzes intramembrane proteolysis. Mediates quorum-sensing and the subsequent regulation of target genes via activation of the Tat protein export system. Catalyzes the proteolytic activation of TatA by removal of its N-terminal extension. The sequence is that of Rhomboid protease AarA (aarA) from Providencia stuartii.